A 338-amino-acid polypeptide reads, in one-letter code: Tryptophan--tRNA ligase (338 aa).

ATP is bound by residues 11–13 and 19–20; these read QPS and GN. The short motif at 12–20 is the 'HIGH' region element; that stretch reads PSGELSIGN. Asp135 is an L-tryptophan binding site. Residues 147-149, Val189, and 198-202 each bind ATP; these read GSD and KMSKS. A 'KMSKS' region motif is present at residues 198–202; sequence KMSKS.

It belongs to the class-I aminoacyl-tRNA synthetase family. In terms of assembly, homodimer.

It is found in the cytoplasm. The catalysed reaction is tRNA(Trp) + L-tryptophan + ATP = L-tryptophyl-tRNA(Trp) + AMP + diphosphate + H(+). Its function is as follows. Catalyzes the attachment of tryptophan to tRNA(Trp). The protein is Tryptophan--tRNA ligase of Vibrio cholerae serotype O1 (strain ATCC 39315 / El Tor Inaba N16961).